The primary structure comprises 483 residues: Altronate oxidoreductase (483 aa).

18–29 (IIQFGEGNFLRA) contributes to the NAD(+) binding site.

It belongs to the mannitol dehydrogenase family. UxaB subfamily.

The catalysed reaction is D-altronate + NAD(+) = keto-D-tagaturonate + NADH + H(+). The protein operates within carbohydrate metabolism; pentose and glucuronate interconversion. In Yersinia pestis, this protein is Altronate oxidoreductase.